A 585-amino-acid polypeptide reads, in one-letter code: Arginine--tRNA ligase (585 aa).

A 'HIGH' region motif is present at residues 127–137 (PNTNKPLHVGH).

Belongs to the class-I aminoacyl-tRNA synthetase family. Monomer.

It is found in the cytoplasm. It catalyses the reaction tRNA(Arg) + L-arginine + ATP = L-arginyl-tRNA(Arg) + AMP + diphosphate. The sequence is that of Arginine--tRNA ligase from Borreliella afzelii (strain PKo) (Borrelia afzelii).